Here is a 614-residue protein sequence, read N- to C-terminus: Sodium- and chloride-dependent betaine transporter (614 aa).

Residues 1–44 lie on the Cytoplasmic side of the membrane; sequence MDRKVTVHEDGCPVVSWVPEEGEMMDQKDKDQVKDRGQWTNKME. The next 3 membrane-spanning stretches (helical) occupy residues 45 to 65, 73 to 92, and 117 to 137; these read FVLS…FPYL, AFFI…VFFL, and GIGM…IIIL. Topologically, residues 138-210 are extracellular; the sequence is AWALFYLFSS…SGIHDLGSLR (73 aa). Asn-171 and Asn-183 each carry an N-linked (GlcNAc...) asparagine glycan. 9 consecutive transmembrane segments (helical) span residues 211 to 229, 238 to 255, 291 to 308, 320 to 341, 374 to 393, 423 to 441, 458 to 478, 499 to 518, and 538 to 556; these read WELA…FCIW, VVYF…ILLI, IFFS…LGSY, IALC…FSIL, MPLS…FLGL, LLIL…LLVT, GICL…VYGA, ISWL…FSLS, and IGWL…FIII. Over 557–614 the chain is Cytoplasmic; it reads TLLKTQGSFKKRLQRLITPDPSLPQPGRRSPQDGSSAQNCSTSPVKQELIAWEKETHL. The tract at residues 574 to 600 is disordered; that stretch reads TPDPSLPQPGRRSPQDGSSAQNCSTSP. A Phosphoserine modification is found at Ser-586. Over residues 588 to 600 the composition is skewed to polar residues; that stretch reads QDGSSAQNCSTSP.

It belongs to the sodium:neurotransmitter symporter (SNF) (TC 2.A.22) family. SLC6A12 subfamily. Interacts with LIN7C.

The protein localises to the basolateral cell membrane. The protein resides in the cell membrane. The enzyme catalyses 4-aminobutanoate(out) + chloride(out) + 3 Na(+)(out) = 4-aminobutanoate(in) + chloride(in) + 3 Na(+)(in). The catalysed reaction is glycine betaine(out) + 2 chloride(out) + 3 Na(+)(out) = glycine betaine(in) + 2 chloride(in) + 3 Na(+)(in). In terms of biological role, transporter that mediates cellular uptake of betaine and GABA in a sodium- and chloride-dependent process. May have a role in regulation of GABAergic transmission in the brain through the reuptake of GABA into presynaptic terminals, as well as in osmotic regulation. Probably also involved in renal and hepatic osmotic regulation. This chain is Sodium- and chloride-dependent betaine transporter (Slc6a12), found in Rattus norvegicus (Rat).